A 157-amino-acid polypeptide reads, in one-letter code: Cyclic pyranopterin monophosphate synthase (157 aa).

Substrate-binding positions include leucine 75–histidine 77 and methionine 111–glutamate 112. The active site involves aspartate 126.

This sequence belongs to the MoaC family. In terms of assembly, homohexamer; trimer of dimers.

It catalyses the reaction (8S)-3',8-cyclo-7,8-dihydroguanosine 5'-triphosphate = cyclic pyranopterin phosphate + diphosphate. The protein operates within cofactor biosynthesis; molybdopterin biosynthesis. Functionally, catalyzes the conversion of (8S)-3',8-cyclo-7,8-dihydroguanosine 5'-triphosphate to cyclic pyranopterin monophosphate (cPMP). This Novosphingobium aromaticivorans (strain ATCC 700278 / DSM 12444 / CCUG 56034 / CIP 105152 / NBRC 16084 / F199) protein is Cyclic pyranopterin monophosphate synthase.